The sequence spans 940 residues: Isoleucine--tRNA ligase (940 aa).

The short motif at 58 to 68 (PYANGSIHIGH) is the 'HIGH' region element. L-isoleucyl-5'-AMP is bound at residue Glu564. The 'KMSKS' region signature appears at 605–609 (KMSKS). Lys608 contacts ATP. Zn(2+)-binding residues include Cys903, Cys906, Cys923, and Cys926.

It belongs to the class-I aminoacyl-tRNA synthetase family. IleS type 1 subfamily. As to quaternary structure, monomer. The cofactor is Zn(2+).

Its subcellular location is the cytoplasm. The enzyme catalyses tRNA(Ile) + L-isoleucine + ATP = L-isoleucyl-tRNA(Ile) + AMP + diphosphate. In terms of biological role, catalyzes the attachment of isoleucine to tRNA(Ile). As IleRS can inadvertently accommodate and process structurally similar amino acids such as valine, to avoid such errors it has two additional distinct tRNA(Ile)-dependent editing activities. One activity is designated as 'pretransfer' editing and involves the hydrolysis of activated Val-AMP. The other activity is designated 'posttransfer' editing and involves deacylation of mischarged Val-tRNA(Ile). The protein is Isoleucine--tRNA ligase of Shewanella sp. (strain W3-18-1).